A 172-amino-acid polypeptide reads, in one-letter code: Lipoprotein signal peptidase (172 aa).

4 helical membrane passes run 12 to 32 (TSAA…VILF), 43 to 63 (VFAY…LVYN), 77 to 97 (WQRW…CYLL), and 102 to 122 (GQKM…GNVI). Residues D132 and D150 contribute to the active site. The chain crosses the membrane as a helical span at residues 142–162 (HWPAFNLADSAITVGAVLLVL).

The protein belongs to the peptidase A8 family.

The protein localises to the cell inner membrane. It carries out the reaction Release of signal peptides from bacterial membrane prolipoproteins. Hydrolyzes -Xaa-Yaa-Zaa-|-(S,diacylglyceryl)Cys-, in which Xaa is hydrophobic (preferably Leu), and Yaa (Ala or Ser) and Zaa (Gly or Ala) have small, neutral side chains.. It participates in protein modification; lipoprotein biosynthesis (signal peptide cleavage). This protein specifically catalyzes the removal of signal peptides from prolipoproteins. The polypeptide is Lipoprotein signal peptidase (Paraburkholderia phytofirmans (strain DSM 17436 / LMG 22146 / PsJN) (Burkholderia phytofirmans)).